Consider the following 72-residue polypeptide: Protein RALF-like 11 (72 aa).

Residues 1–17 (MKAWLICLLVICAAVIA) form the signal peptide. Intrachain disulfides connect Cys34–Cys43 and Cys63–Cys69.

The protein belongs to the plant rapid alkalinization factor (RALF) family.

It is found in the secreted. In terms of biological role, cell signaling peptide that may regulate plant stress, growth, and development. Mediates a rapid alkalinization of extracellular space by mediating a transient increase in the cytoplasmic Ca(2+) concentration leading to a calcium-dependent signaling events through a cell surface receptor and a concomitant activation of some intracellular mitogen-activated protein kinases. The protein is Protein RALF-like 11 (RALFL11) of Arabidopsis thaliana (Mouse-ear cress).